A 946-amino-acid polypeptide reads, in one-letter code: Bifunctional glutamine synthetase adenylyltransferase/adenylyl-removing enzyme (946 aa).

The interval 1–440 (MKPLSSPLQQ…VFNELIGDDE (440 aa)) is adenylyl removase. The adenylyl transferase stretch occupies residues 449 to 946 (SEQWRELWQD…ASWQKWLVEE (498 aa)).

The protein belongs to the GlnE family. Mg(2+) serves as cofactor.

The catalysed reaction is [glutamine synthetase]-O(4)-(5'-adenylyl)-L-tyrosine + phosphate = [glutamine synthetase]-L-tyrosine + ADP. The enzyme catalyses [glutamine synthetase]-L-tyrosine + ATP = [glutamine synthetase]-O(4)-(5'-adenylyl)-L-tyrosine + diphosphate. In terms of biological role, involved in the regulation of glutamine synthetase GlnA, a key enzyme in the process to assimilate ammonia. When cellular nitrogen levels are high, the C-terminal adenylyl transferase (AT) inactivates GlnA by covalent transfer of an adenylyl group from ATP to specific tyrosine residue of GlnA, thus reducing its activity. Conversely, when nitrogen levels are low, the N-terminal adenylyl removase (AR) activates GlnA by removing the adenylyl group by phosphorolysis, increasing its activity. The regulatory region of GlnE binds the signal transduction protein PII (GlnB) which indicates the nitrogen status of the cell. The protein is Bifunctional glutamine synthetase adenylyltransferase/adenylyl-removing enzyme of Shigella flexneri.